Consider the following 348-residue polypeptide: 3',5'-cyclic-nucleotide phosphodiesterase (348 aa).

The cofactor is Mn(2+).

It catalyses the reaction a nucleoside 3',5'-cyclic phosphate + H2O = a nucleoside 5'-phosphate + H(+). Hydrolyzes cAMP to 5'-AMP and cGMP to 5'-GMP. Does not show phosphohydrolase activity toward various phosphatidylcholine and phosphorylated sugars. This chain is 3',5'-cyclic-nucleotide phosphodiesterase, found in Helicobacter pylori (strain ATCC 700392 / 26695) (Campylobacter pylori).